Reading from the N-terminus, the 176-residue chain is Large ribosomal subunit protein uL10 (176 aa).

It belongs to the universal ribosomal protein uL10 family. Part of the ribosomal stalk of the 50S ribosomal subunit. The N-terminus interacts with L11 and the large rRNA to form the base of the stalk. The C-terminus forms an elongated spine to which L12 dimers bind in a sequential fashion forming a multimeric L10(L12)X complex.

Functionally, forms part of the ribosomal stalk, playing a central role in the interaction of the ribosome with GTP-bound translation factors. This is Large ribosomal subunit protein uL10 from Streptomyces avermitilis (strain ATCC 31267 / DSM 46492 / JCM 5070 / NBRC 14893 / NCIMB 12804 / NRRL 8165 / MA-4680).